The chain runs to 230 residues: MSERAPVVTIDGPSGAGKGTISQLLAKHLGWQLLDSGAIYRVLALAAIHHDVELENEESITLLAAHLDVKFLTGNEKDPVQVILEGEDVTTAIRTQECSNAASKVAAFPRVREALLRRQRAFRTAPGLIADGRDMGTVVFPTASAKLYLTASAEERAQRRYNQLQDKGFDVNIERLLAEIIERDDRDMNRPVAPLVPAEDALVIDTSDKGIDEVLELALNYINQKLSNTN.

Position 12–20 (12–20 (GPSGAGKGT)) interacts with ATP.

This sequence belongs to the cytidylate kinase family. Type 1 subfamily.

The protein localises to the cytoplasm. It carries out the reaction CMP + ATP = CDP + ADP. The enzyme catalyses dCMP + ATP = dCDP + ADP. This is Cytidylate kinase from Shewanella sp. (strain MR-4).